Consider the following 560-residue polypeptide: Ribonuclease J 1 (560 aa).

Zn(2+) contacts are provided by His-76, His-78, Asp-80, His-81, His-144, and Asp-166. Substrate is bound at residue 366 to 370; that stretch reads HTSGH. His-392 lines the Zn(2+) pocket.

This sequence belongs to the metallo-beta-lactamase superfamily. RNA-metabolizing metallo-beta-lactamase-like family. Bacterial RNase J subfamily. In terms of assembly, homodimer, may be a subunit of the RNA degradosome. It depends on Zn(2+) as a cofactor.

It is found in the cytoplasm. In terms of biological role, an RNase that has 5'-3' exonuclease and possibly endonuclease activity. Involved in maturation of rRNA and in some organisms also mRNA maturation and/or decay. Has an overlapping but not completely redundant role with RNase J2 in the decay of mRNA. This is Ribonuclease J 1 from Streptococcus pyogenes serotype M3 (strain ATCC BAA-595 / MGAS315).